The following is a 394-amino-acid chain: Xylose isomerase (394 aa).

Residues His-54 and Asp-57 contribute to the active site. Glu-180, Glu-216, His-219, Asp-244, Asp-254, Asp-256, and Asp-285 together coordinate Mg(2+). The tract at residues 370–394 (VRTPRPAGDGPPAGRARLTVAPRKR) is disordered. Low complexity predominate over residues 373–386 (PRPAGDGPPAGRAR).

It belongs to the xylose isomerase family. Homotetramer. The cofactor is Mg(2+).

The protein resides in the cytoplasm. The enzyme catalyses alpha-D-xylose = alpha-D-xylulofuranose. Involved in D-xylose catabolism. The polypeptide is Xylose isomerase (xylA) (Streptomyces rochei (Streptomyces parvullus)).